The sequence spans 30 residues: Dicynthaurin (30 aa).

A Threonine amide modification is found at Thr30.

Homodimer.

The protein localises to the secreted. Shows antibacterial activity against both Gram-positive and Gram-negative bacteria. Its antimicrobial activity is optimal at NaCl concentrations below 100 mM, suggesting that the antimicrobial actions of this peptide may take place intracellularly rather than extracellularly. Has no activity against the fungus C.albicans. Has modest hemolytic activity. This chain is Dicynthaurin, found in Halocynthia aurantium (Sea peach).